Consider the following 78-residue polypeptide: Calcium/calmodulin-dependent protein kinase II inhibitor 1 (78 aa).

Residues 41–68 (SKRPPKLGQIGRSKRVVIEDDRIDDVLK) are CAMK2 inhibitory domain.

Belongs to the CAMK2N family. In terms of assembly, interacts with CAMK2B; the presence of Ca(2+)/calmodulin increases the interaction but is not essential. Interacts with CAMK2A; this interaction requires CAMK2A activation by Ca(2+). In terms of tissue distribution, expressed in the brain (at protein level). Expressed in cardiomyocytes but not cardiac fibroblasts (at protein level).

The protein resides in the synapse. It is found in the cell projection. The protein localises to the dendrite. It localises to the postsynaptic density. In terms of biological role, potent and specific inhibitor of CaM-kinase II (CAMK2). Plays a role in the maintenance of long-term retrieval-induced memory in response to contextual fear. Modulates blood pressure and vascular reactivity via regulation of CAMK2 activity in addition to regulation of left ventricular mass. Mediates the NLRP3 inflammasome in cardiomyocytes via acting as an inhibitor of the MAPK14/p38 and MAPK8/JNK pathways, thereby regulating ventricular remodeling and cardiac rhythm post-myocardial infarction. Negatively effects insulin sensitivity and promotes lipid formation in adipose tissues independent of CAMK2 signaling. The protein is Calcium/calmodulin-dependent protein kinase II inhibitor 1 (Camk2n1) of Mus musculus (Mouse).